Consider the following 108-residue polypeptide: MNEVRFHDLVDAVQQQVEDAFDDSGLDLDLENAGGVLTVRFENGSQLILSRQAPLYQLWVAAKSGGFHFDYDETSGLWRHDASREPLGALLNRATLEQGGEDVEFPGL.

Belongs to the frataxin family.

Its function is as follows. Involved in iron-sulfur (Fe-S) cluster assembly. May act as a regulator of Fe-S biogenesis. This is Iron-sulfur cluster assembly protein CyaY from Pseudomonas paraeruginosa (strain DSM 24068 / PA7) (Pseudomonas aeruginosa (strain PA7)).